We begin with the raw amino-acid sequence, 631 residues long: Dolichyl-diphosphooligosaccharide--protein glycosyltransferase subunit 2 (631 aa).

The first 22 residues, 1 to 22, serve as a signal peptide directing secretion; it reads MALPGSSTVFLLALTIIASTQA. Over 23–540 the chain is Lumenal; that stretch reads LTPTHYLTKH…REPEKRPPTV (518 aa). Residue Asn106 is glycosylated (N-linked (GlcNAc...) asparagine). A Glycyl lysine isopeptide (Lys-Gly) (interchain with G-Cter in ubiquitin) cross-link involves residue Lys154. A helical transmembrane segment spans residues 541–561; it reads VSNTFTALILSPLLLLFALWI. Residues 562 to 571 lie on the Cytoplasmic side of the membrane; it reads RIGANVSNFT. The chain crosses the membrane as a helical span at residues 572 to 592; the sequence is FAPSTIVFHLGHAAMLGLMYV. At 593-596 the chain is on the lumenal side; that stretch reads YWTQ. Residues 597 to 617 traverse the membrane as a helical segment; that stretch reads LNMFQTLKYLAILGSVTFLAG. Residues 618-631 lie on the Cytoplasmic side of the membrane; it reads NRMLAQQAIKRTAH.

Belongs to the SWP1 family. In terms of assembly, component of the oligosaccharyltransferase (OST) complex. OST exists in two different complex forms which contain common core subunits RPN1, RPN2, OST48, OST4, DAD1 and TMEM258, either STT3A or STT3B as catalytic subunits, and form-specific accessory subunits. STT3A complex assembly occurs through the formation of 3 subcomplexes. Subcomplex 1 contains RPN1 and TMEM258, subcomplex 2 contains the STT3A-specific subunits STT3A, DC2/OSTC, and KCP2 as well as the core subunit OST4, and subcomplex 3 contains RPN2, DAD1, and OST48. The STT3A complex can form stable complexes with the Sec61 complex or with both the Sec61 and TRAP complexes. Interacts with DDI2. Interacts with TMEM35A/NACHO.

The protein resides in the endoplasmic reticulum. It localises to the endoplasmic reticulum membrane. It functions in the pathway protein modification; protein glycosylation. Its function is as follows. Subunit of the oligosaccharyl transferase (OST) complex that catalyzes the initial transfer of a defined glycan (Glc(3)Man(9)GlcNAc(2) in eukaryotes) from the lipid carrier dolichol-pyrophosphate to an asparagine residue within an Asn-X-Ser/Thr consensus motif in nascent polypeptide chains, the first step in protein N-glycosylation. N-glycosylation occurs cotranslationally and the complex associates with the Sec61 complex at the channel-forming translocon complex that mediates protein translocation across the endoplasmic reticulum (ER). All subunits are required for a maximal enzyme activity. This is Dolichyl-diphosphooligosaccharide--protein glycosyltransferase subunit 2 from Bos taurus (Bovine).